Consider the following 524-residue polypeptide: 2-isopropylmalate synthase (524 aa).

In terms of domain architecture, Pyruvate carboxyltransferase spans 5–267; the sequence is VIIFDTTLRD…HTNINHQEIF (263 aa). 4 residues coordinate Mn(2+): Asp-14, His-202, His-204, and Asn-238. The interval 392–524 is regulatory domain; the sequence is SLDYFSVQSG…SKHQNNQETV (133 aa).

This sequence belongs to the alpha-IPM synthase/homocitrate synthase family. LeuA type 1 subfamily. Homodimer. The cofactor is Mn(2+).

It localises to the cytoplasm. The enzyme catalyses 3-methyl-2-oxobutanoate + acetyl-CoA + H2O = (2S)-2-isopropylmalate + CoA + H(+). The protein operates within amino-acid biosynthesis; L-leucine biosynthesis; L-leucine from 3-methyl-2-oxobutanoate: step 1/4. In terms of biological role, catalyzes the condensation of the acetyl group of acetyl-CoA with 3-methyl-2-oxobutanoate (2-ketoisovalerate) to form 3-carboxy-3-hydroxy-4-methylpentanoate (2-isopropylmalate). In Serratia proteamaculans (strain 568), this protein is 2-isopropylmalate synthase.